The sequence spans 159 residues: Regulator of G-protein signaling 13 (159 aa).

Residues 34–150 form the RGS domain; the sequence is SFENLMATKY…LKSEMYQKLL (117 aa).

Inhibits signal transduction by increasing the GTPase activity of G protein alpha subunits thereby driving them into their inactive GDP-bound form. Binds to both G(i)-alpha and G(q)-alpha. The chain is Regulator of G-protein signaling 13 (RGS13) from Homo sapiens (Human).